We begin with the raw amino-acid sequence, 101 residues long: RNA-binding protein Hfq (101 aa).

The Sm domain maps to 9–68; that stretch reads DPFLNALRRERVPVSIYLVNGIKLQGQIESFDQFVILLKNTVSQMVYKHAISTVVPSRPV. Residues 63–101 are disordered; that stretch reads VPSRPVSHHNNNPSGGSSNYHHGSTPASQPSQPESDDAE. Residues 70-86 show a composition bias toward low complexity; sequence HHNNNPSGGSSNYHHGS.

It belongs to the Hfq family. Homohexamer.

Its function is as follows. RNA chaperone that binds small regulatory RNA (sRNAs) and mRNAs to facilitate mRNA translational regulation in response to envelope stress, environmental stress and changes in metabolite concentrations. Also binds with high specificity to tRNAs. The chain is RNA-binding protein Hfq from Sodalis glossinidius (strain morsitans).